A 78-amino-acid chain; its full sequence is Defensin-like protein (78 aa).

A signal peptide spans 1-31 (MGRSIRLFATFFLIAMLFLSTEMGPMTSAEA). Intrachain disulfides connect Cys34/Cys78, Cys45/Cys65, Cys51/Cys72, and Cys55/Cys74.

It belongs to the DEFL family. In terms of tissue distribution, predominantly expressed in the pistil during all stages of flower development.

It localises to the secreted. In terms of biological role, may be involved in the defense of the pistil against pathogen infection. The chain is Defensin-like protein from Petunia integrifolia (Violet-flowered petunia).